Reading from the N-terminus, the 351-residue chain is Dihydroorotate dehydrogenase (quinone) (351 aa).

FMN contacts are provided by residues 61 to 65 (AGLDK) and threonine 85. Residue lysine 65 coordinates substrate. 110 to 114 (NRMGF) serves as a coordination point for substrate. Asparagine 139 and asparagine 172 together coordinate FMN. Asparagine 172 contributes to the substrate binding site. Residue serine 175 is the Nucleophile of the active site. Residue asparagine 177 coordinates substrate. FMN contacts are provided by lysine 217 and threonine 245. 246–247 (NT) provides a ligand contact to substrate. FMN is bound by residues glycine 268, glycine 297, and 318 to 319 (YS).

The protein belongs to the dihydroorotate dehydrogenase family. Type 2 subfamily. Monomer. Requires FMN as cofactor.

Its subcellular location is the cell membrane. The enzyme catalyses (S)-dihydroorotate + a quinone = orotate + a quinol. The protein operates within pyrimidine metabolism; UMP biosynthesis via de novo pathway; orotate from (S)-dihydroorotate (quinone route): step 1/1. In terms of biological role, catalyzes the conversion of dihydroorotate to orotate with quinone as electron acceptor. The sequence is that of Dihydroorotate dehydrogenase (quinone) from Stenotrophomonas maltophilia (strain K279a).